Here is a 414-residue protein sequence, read N- to C-terminus: Na(+)-translocating NADH-quinone reductase subunit B (414 aa).

4 consecutive transmembrane segments (helical) span residues 23–40 (WFALYEAVATVFYTPGLV), 56–76 (IMIMVWFAVFPAMFWGMYNAG), 129–149 (FLPIYATVFLVGGFWEVLFCM), and 164–184 (ILFALIVPPTLPLWQAALGIT). Residue Thr-236 is modified to FMN phosphoryl threonine. Transmembrane regions (helical) follow at residues 268-288 (IPGSIGEVSTLALMIGAAMIV), 297-317 (IIAGVMIGMIAVSTLFNVVGS), 325-345 (MPWHWHLVLGGFAFGMFFMAT), 358-378 (WWYGILIGAMCVMIRVVNPAY), and 381-401 (GMMLAILFANLFAPLFDHVVI).

The protein belongs to the NqrB/RnfD family. As to quaternary structure, composed of six subunits; NqrA, NqrB, NqrC, NqrD, NqrE and NqrF. It depends on FMN as a cofactor.

The protein localises to the cell inner membrane. The catalysed reaction is a ubiquinone + n Na(+)(in) + NADH + H(+) = a ubiquinol + n Na(+)(out) + NAD(+). Functionally, NQR complex catalyzes the reduction of ubiquinone-1 to ubiquinol by two successive reactions, coupled with the transport of Na(+) ions from the cytoplasm to the periplasm. NqrA to NqrE are probably involved in the second step, the conversion of ubisemiquinone to ubiquinol. The sequence is that of Na(+)-translocating NADH-quinone reductase subunit B from Vibrio parahaemolyticus serotype O3:K6 (strain RIMD 2210633).